A 709-amino-acid polypeptide reads, in one-letter code: ATP-binding cassette sub-family F member 3 (709 aa).

N-acetylalanine is present on alanine 2. Phosphoserine is present on serine 83. The span at 129–143 (RLKAKQEKRSEKDTL) shows a compositional bias: basic and acidic residues. The interval 129–171 (RLKAKQEKRSEKDTLKTSNPLVLEEASASQAGSRKESRLESSG) is disordered. Residues serine 155, serine 157, and serine 161 each carry the phosphoserine modification. Positions 161 to 171 (SRKESRLESSG) are enriched in basic and acidic residues. 2 ABC transporter domains span residues 178–424 (VRIE…LNQQ) and 492–707 (LQLD…RREG). 210–217 (GRNGLGKT) contributes to the ATP binding site. Serine 283 carries the post-translational modification Phosphoserine. Residue 525-532 (GENGAGKS) participates in ATP binding.

Belongs to the ABC transporter superfamily. ABCF family. EF3 subfamily.

Its function is as follows. Displays an antiviral effect against flaviviruses such as west Nile virus (WNV) in the presence of OAS1B. The polypeptide is ATP-binding cassette sub-family F member 3 (ABCF3) (Homo sapiens (Human)).